Consider the following 119-residue polypeptide: Large ribosomal subunit protein bL20 (119 aa).

The protein belongs to the bacterial ribosomal protein bL20 family.

In terms of biological role, binds directly to 23S ribosomal RNA and is necessary for the in vitro assembly process of the 50S ribosomal subunit. It is not involved in the protein synthesizing functions of that subunit. In Acidovorax ebreus (strain TPSY) (Diaphorobacter sp. (strain TPSY)), this protein is Large ribosomal subunit protein bL20.